The primary structure comprises 588 residues: Zeta-carotene desaturase, chloroplastic/chromoplastic (588 aa).

A chloroplast and chromoplast-targeting transit peptide spans 1-49 (MATCSAYLCCPATSASLKKRVFPDGSAGFLFFGGRRLSNRLVTPKSVIR).

This sequence belongs to the zeta carotene desaturase family. In terms of assembly, monomer and dimer. It depends on decylplastoquinone as a cofactor. The cofactor is 6-decylubiquinone.

The protein localises to the plastid. The protein resides in the chloroplast. Its subcellular location is the chromoplast. The enzyme catalyses 9,9'-di-cis-zeta-carotene + 2 a quinone = 7,7',9,9'-tetra-cis-lycopene + 2 a quinol. It participates in carotenoid biosynthesis; lycopene biosynthesis. Its function is as follows. Catalyzes the conversion of zeta-carotene to lycopene via the intermediary of neurosporene. It carries out two consecutive desaturations (introduction of double bonds) at positions C-7 and C-7'. Shows stereoselectivity toward trans C15-C15'zeta-carotene double bond. The zeta-carotene produced by the phytoene desaturase PDS has a C15-C15' double bond in the cis configuration and it requires isomerization before being recognized as substrate by ZDS. No activity with all-trans-zeta-carotene. The main product is 7,9,7',9'-tetra-cis-lycopene (pro-lycopene). The sequence is that of Zeta-carotene desaturase, chloroplastic/chromoplastic (ZDS) from Capsicum annuum (Capsicum pepper).